The primary structure comprises 687 residues: MKPVHERSQECLPPKKRDLPVTSEDMGRTTSCSTNHTPSSDASEWSRGVVVAGQSQTGARVSLGGDGTEAITGLTVDQYGMLYKVAVPPATFSPTGLPSVVNMSPLPPTFNVASSLIQHPGIHYPPVHYAQLPSTSLQFIGSPYSLPYAVPPNFLPSPLLSPSANLATTHLPHFVPYASLLAEEATPPPQAASPAQSFNKSSSATSPPGQLPHHSNTQPLDLAPGRMPIYYQMSRLPAGYTLHETSTAGASPILTPQEGQSALEAAAANGQRQRERNVRRESEALDSASSKGESQGLVPVVECMADGQLFSGSQTPRVEVAAPAHRGTPDTDLEVQRVVGALASQDYRVVAAQRKDEPSPLNLSHHNLDHQGEGRGSARNPTELVEKSQARVFYPQSHQEPVKHRPLPKAMVVANGNLVPTGTDPSLLPVGSEILVASSLDLQARATFPDKEPTPPPVTSSHLPSHFMKGAIIQLATGELKRVEDLQTQDFVRSAEVSGGLKIDSSTVVDIQESQWPGFVMLHFVVGEQQSKVSIEVPPEHPFFVYGQGWSSCSPGRTAQLFSLPCHRLQVGDVCISISLQSLNSNSVSQASCAPPGQLGTPRERPERTVLGPRDLCDSEGKNQPSGEGSRVGEPSQPEPGAQACWPAPSFQRFSMQGEEARAAMLRPSFIPQEVKLSIEGRSNAGK.

The span at 1–19 (MKPVHERSQECLPPKKRDL) shows a compositional bias: basic and acidic residues. Disordered stretches follow at residues 1–46 (MKPV…SEWS), 185–223 (ATPP…LDLA), and 261–294 (SALE…KGES). Residues 20-197 (PVTSEDMGRT…PPQAASPAQS (178 aa)) form an interaction with NCOR2 and ATXN1 region. The segment at 20 to 197 (PVTSEDMGRT…PPQAASPAQS (178 aa)) is self-association. Composition is skewed to polar residues over residues 28–43 (RTTS…SDAS) and 198–219 (FNKS…NTQP). A compositionally biased stretch (basic and acidic residues) spans 272–283 (RQRERNVRRESE). At Ser282 the chain carries Phosphoserine. The residue at position 328 (Thr328) is a Phosphothreonine. The tract at residues 356 to 379 (DEPSPLNLSHHNLDHQGEGRGSAR) is disordered. Position 359 is a phosphoserine (Ser359). Residues 455-586 (PPPVTSSHLP…SISLQSLNSN (132 aa)) form the AXH domain. The tract at residues 587 to 649 (SVSQASCAPP…PGAQACWPAP (63 aa)) is disordered.

Belongs to the ATXN1 family. In terms of assembly, homodimer. Interacts (via AXH domain) with NCOR2. Interacts with ATXN1 and CIC. Directly interacts with RBPJ; this interaction is disrupted in the presence of Notch intracellular domain. Competes with ATXN1 for RBPJ-binding. Found in a complex with CIC and ATXN1. Expressed in the cortex and hypothalamus (at protein level). Expressed in neuronal cells. Highly expressed in Purkinje cells of cerebellum.

The protein resides in the nucleus. The protein localises to the cell projection. It is found in the dendrite. In terms of biological role, chromatin-binding factor that repress Notch signaling in the absence of Notch intracellular domain by acting as a CBF1 corepressor. Binds to the HEY promoter and might assist, along with NCOR2, RBPJ-mediated repression. Can suppress the cytotoxicity of ATXN1 in spinocerebellar ataxia type 1 (SCA1). In concert with CIC and ATXN1, involved in brain development. This Mus musculus (Mouse) protein is Ataxin-1-like (Atxn1l).